Consider the following 947-residue polypeptide: Zinc finger CCCH domain-containing protein 18 (947 aa).

Position 1 is an N-acetylmethionine (Met-1). 3 disordered regions span residues 1–218 (MDVA…PRPT), 275–295 (GGPV…TESA), and 387–921 (YTEA…TLSR). 9 positions are modified to phosphoserine: Ser-6, Ser-32, Ser-44, Ser-57, Ser-63, Ser-70, Ser-74, Ser-79, and Ser-91. Residues 73-85 (KSQDQDSEAHELS) are compositionally biased toward basic and acidic residues. Residues 94 to 104 (EEGDDAEEDGT) show a composition bias toward acidic residues. A Phosphothreonine modification is found at Thr-104. 2 positions are modified to phosphoserine: Ser-105 and Ser-113. Positions 105–119 (SDLRDEASSVTRELD) are enriched in basic and acidic residues. 2 stretches are compositionally biased toward acidic residues: residues 120–131 (EHELDYDEEVPE) and 138–153 (QEEE…EEEK). The span at 160-185 (EEGKPDVQSVGEKEPTEAAKEKKKED) shows a compositional bias: basic and acidic residues. A Phosphoserine modification is found at Ser-168. The span at 186–202 (DDGEIDDGEIDDDDLEE) shows a compositional bias: acidic residues. Positions 203–212 (GEVKDPSDRK) are enriched in basic and acidic residues. A C3H1-type zinc finger spans residues 214-240 (RPRPTCRFFMKGNCTWGMNCRFIHPGV). A compositionally biased stretch (basic and acidic residues) spans 391–479 (EPYHNYRDRE…DRDKDKEKPK (89 aa)). A Phosphoserine modification is found at Ser-482. A Glycyl lysine isopeptide (Lys-Gly) (interchain with G-Cter in SUMO2) cross-link involves residue Lys-505. Over residues 505 to 515 (KRADEWKDPWR) the composition is skewed to basic and acidic residues. 3 positions are modified to phosphoserine: Ser-527, Ser-529, and Ser-531. Over residues 540–601 (SASSASASNS…SRSRSFSSSP (62 aa)) the composition is skewed to low complexity. Positions 602–611 (SPSPTPSPHR) are enriched in pro residues. Residues Lys-617 and Lys-656 each participate in a glycyl lysine isopeptide (Lys-Gly) (interchain with G-Cter in SUMO2) cross-link. Over residues 656–665 (KPGDLREARR) the composition is skewed to basic and acidic residues. 2 stretches are compositionally biased toward low complexity: residues 687-720 (GSSY…SVHS) and 731-745 (ASPV…PTPA). Residues 755–769 (KKEDGVREEKRKRDP) are compositionally biased toward basic and acidic residues. Residues 773 to 804 (PPKSSKAPAGGKASQQAAAPQQAAPGQPQQGS) are compositionally biased toward low complexity. Lys-809 is subject to N6-acetyllysine. Lys-812 is covalently cross-linked (Glycyl lysine isopeptide (Lys-Gly) (interchain with G-Cter in SUMO2)). Over residues 819 to 836 (AAEKGSRKRYEPSDKDRQ) the composition is skewed to basic and acidic residues. 5 positions are modified to phosphoserine: Ser-837, Ser-846, Ser-862, Ser-887, and Ser-890. The segment covering 887–918 (SPQSKSSSKVTSVPGKATDTATAGTKSGKAST) has biased composition (low complexity). Residue Lys-902 forms a Glycyl lysine isopeptide (Lys-Gly) (interchain with G-Cter in SUMO2) linkage. Residues 915–944 (KASTLSRREELLKQLKAVEDAIARKRAKIP) adopt a coiled-coil conformation.

Interacts with ZFC3H1 in a RNase-insensitive manner.

Its subcellular location is the nucleus. The polypeptide is Zinc finger CCCH domain-containing protein 18 (Zc3h18) (Rattus norvegicus (Rat)).